The following is a 411-amino-acid chain: Bifunctional protein GlmU (411 aa).

The pyrophosphorylase stretch occupies residues 1-204 (MDAVILCAGK…ENNIKGIKLN (204 aa)). UTP-binding positions include 6–9 (LCAG), glutamine 74, and glycine 79. N-acetyl-alpha-D-glucosamine 1-phosphate-binding residues include threonine 80, glycine 132, glutamate 144, and asparagine 158. Residues 205–224 (GYWNDIGKPWDLLDANTHIL) form a linker region. Residues 225–411 (KNIKTDIKGK…EEIIIKTKRK (187 aa)) form an N-acetyltransferase region. Histidine 308 (proton acceptor) is an active-site residue. 2 residues coordinate acetyl-CoA: alanine 384 and lysine 401.

It in the N-terminal section; belongs to the N-acetylglucosamine-1-phosphate uridyltransferase family. The protein in the C-terminal section; belongs to the transferase hexapeptide repeat family.

The enzyme catalyses N-acetyl-alpha-D-glucosamine 1-phosphate + UTP + H(+) = UDP-N-acetyl-alpha-D-glucosamine + diphosphate. It catalyses the reaction alpha-D-glucosamine 1-phosphate + acetyl-CoA = N-acetyl-alpha-D-glucosamine 1-phosphate + CoA + H(+). It participates in nucleotide-sugar biosynthesis; UDP-N-acetyl-alpha-D-glucosamine biosynthesis; N-acetyl-alpha-D-glucosamine 1-phosphate from alpha-D-glucosamine 6-phosphate (route II): step 2/2. The protein operates within nucleotide-sugar biosynthesis; UDP-N-acetyl-alpha-D-glucosamine biosynthesis; UDP-N-acetyl-alpha-D-glucosamine from N-acetyl-alpha-D-glucosamine 1-phosphate: step 1/1. In terms of biological role, catalyzes the last two sequential reactions in the de novo biosynthetic pathway for UDP-N-acetyl-glucosamine (UDP-GlcNAc). Responsible for the acetylation of GlcN-1-P to GlcNAc-1-P, and for the uridyl transfer from UTP to GlcNAc-1-P, to produce UDP-GlcNAc and pyrophosphate. The sequence is that of Bifunctional protein GlmU from Methanococcus aeolicus (strain ATCC BAA-1280 / DSM 17508 / OCM 812 / Nankai-3).